The following is a 99-amino-acid chain: Small integral membrane protein 9 (99 aa).

The N-terminal stretch at M1–S26 is a signal peptide. Topologically, residues S27–A73 are extracellular. Residues I74–V94 traverse the membrane as a helical segment. Residues V95–H99 are Cytoplasmic-facing.

It localises to the cell membrane. This Homo sapiens (Human) protein is Small integral membrane protein 9 (SMIM9).